Reading from the N-terminus, the 327-residue chain is MTISILGAGAWGTAIANSLSGKQNVILWTHNKTTFESISRTRESDKLLGCQIPENVSVKLAIKETVNASAMIFAVPTQSLRKVCQQLHDCNLKKDVAIILACKGIEKSTLKLPSEIVNEVLPNNPVAIFSGPSFAIEVAKKLPYSMVLACQDDTLGSKLISELQQENIKLHFSSDVVGVQICAALKNVFAIACGIVLGKKLGFNAHAALVTKSMNEVKTLYLAKTDSVSIDIDTLLGPACLGDLIMTCTSLNSRNLSFGFKIGSSNNSFDAQQTLSEGKSVIEGFSTAQSAFNLAEKLKIKMPICEAVYRLLYESASIEDTISVFVG.

3 residues coordinate NADPH: Trp-11, His-30, and Lys-103. Residues Lys-103, Gly-131, and Ser-133 each coordinate sn-glycerol 3-phosphate. Ala-135 contacts NADPH. Lys-186, Asp-243, Ser-253, Arg-254, and Asn-255 together coordinate sn-glycerol 3-phosphate. The active-site Proton acceptor is the Lys-186. Arg-254 contacts NADPH. Positions 281 and 283 each coordinate NADPH.

The protein belongs to the NAD-dependent glycerol-3-phosphate dehydrogenase family.

Its subcellular location is the cytoplasm. It carries out the reaction sn-glycerol 3-phosphate + NAD(+) = dihydroxyacetone phosphate + NADH + H(+). It catalyses the reaction sn-glycerol 3-phosphate + NADP(+) = dihydroxyacetone phosphate + NADPH + H(+). It participates in membrane lipid metabolism; glycerophospholipid metabolism. In terms of biological role, catalyzes the reduction of the glycolytic intermediate dihydroxyacetone phosphate (DHAP) to sn-glycerol 3-phosphate (G3P), the key precursor for phospholipid synthesis. In Wolbachia sp. subsp. Brugia malayi (strain TRS), this protein is Glycerol-3-phosphate dehydrogenase [NAD(P)+].